A 205-amino-acid chain; its full sequence is MLTITLSKGRILKQTLPLLEQAGLIIAKQELNSRKLILDTNLTDVKVIIVRSTDVPVFVQHGATDMGIAGKDVLLEHGANNLFEVLDLGIAKCKLMVAAESKNRLKQNTLKVATKYVNSTKRYFQNKGQSCEIIKLYGAMELAPKVGLAHCIVDLVDTGNTLKANGLIPFEYIEKISSRLVVNVASFRTKNAQIKSWIQNIENSL.

Belongs to the ATP phosphoribosyltransferase family. Short subfamily. As to quaternary structure, heteromultimer composed of HisG and HisZ subunits.

It is found in the cytoplasm. It catalyses the reaction 1-(5-phospho-beta-D-ribosyl)-ATP + diphosphate = 5-phospho-alpha-D-ribose 1-diphosphate + ATP. It participates in amino-acid biosynthesis; L-histidine biosynthesis; L-histidine from 5-phospho-alpha-D-ribose 1-diphosphate: step 1/9. In terms of biological role, catalyzes the condensation of ATP and 5-phosphoribose 1-diphosphate to form N'-(5'-phosphoribosyl)-ATP (PR-ATP). Has a crucial role in the pathway because the rate of histidine biosynthesis seems to be controlled primarily by regulation of HisG enzymatic activity. The protein is ATP phosphoribosyltransferase of Vesicomyosocius okutanii subsp. Calyptogena okutanii (strain HA).